The following is a 65-amino-acid chain: Hirudin-3A (65 aa).

Residues 1–3 (VVY) form an interaction with thrombin active site region. Cystine bridges form between Cys-6–Cys-14, Cys-16–Cys-28, and Cys-22–Cys-39. Residues 39 to 65 (CVTGEGTPKPQSHNDGDFEEIPEEYLQ) form a disordered region. Residue Thr-45 is glycosylated (O-linked (GalNAc...) threonine). The segment at 55–65 (DFEEIPEEYLQ) is interaction with fibrinogen-binding exosite of thrombin. The span at 55-65 (DFEEIPEEYLQ) shows a compositional bias: acidic residues. Position 63 is a sulfotyrosine (Tyr-63).

This sequence belongs to the protease inhibitor I14 (hirudin) family.

Its subcellular location is the secreted. Its function is as follows. Hirudin is a potent thrombin-specific protease inhibitor. It forms a stable non-covalent complex with alpha-thrombin, thereby abolishing its ability to cleave fibrinogen. This is Hirudin-3A from Hirudo medicinalis (Medicinal leech).